A 98-amino-acid chain; its full sequence is NADH-ubiquinone oxidoreductase chain 4L (98 aa).

Transmembrane regions (helical) follow at residues 2–22 (PSIS…MLMF), 29–49 (SLLC…LTIL), and 61–81 (ILLL…LVMV).

The protein belongs to the complex I subunit 4L family. Core subunit of respiratory chain NADH dehydrogenase (Complex I) which is composed of 45 different subunits.

The protein localises to the mitochondrion inner membrane. The catalysed reaction is a ubiquinone + NADH + 5 H(+)(in) = a ubiquinol + NAD(+) + 4 H(+)(out). In terms of biological role, core subunit of the mitochondrial membrane respiratory chain NADH dehydrogenase (Complex I) which catalyzes electron transfer from NADH through the respiratory chain, using ubiquinone as an electron acceptor. Part of the enzyme membrane arm which is embedded in the lipid bilayer and involved in proton translocation. This is NADH-ubiquinone oxidoreductase chain 4L (MT-ND4L) from Microcebus mittermeieri (Mittermeier's mouse lemur).